The sequence spans 376 residues: Mitogen-activated protein kinase 2 (376 aa).

In terms of domain architecture, Protein kinase spans 32-319 (YVPIKPIGRG…VTEALQHPYM (288 aa)). Residues 38 to 46 (IGRGAYGVV) and K61 contribute to the ATP site. D158 functions as the Proton acceptor in the catalytic mechanism. T191 carries the post-translational modification Phosphothreonine. The short motif at 191–193 (TEY) is the TXY element. Y193 carries the phosphotyrosine modification. T196 carries the phosphothreonine modification.

Belongs to the protein kinase superfamily. CMGC Ser/Thr protein kinase family. MAP kinase subfamily. In terms of assembly, interacts with MKK3. Dually phosphorylated on Thr-191 and Tyr-193, which activates the enzyme. Phosphorylated on Ser residue. As to expression, highest levels in the stem. Present in the leaf, root and flower, but not in seeds.

The catalysed reaction is L-seryl-[protein] + ATP = O-phospho-L-seryl-[protein] + ADP + H(+). It carries out the reaction L-threonyl-[protein] + ATP = O-phospho-L-threonyl-[protein] + ADP + H(+). Activated by threonine and tyrosine phosphorylation. This is Mitogen-activated protein kinase 2 (MPK2) from Arabidopsis thaliana (Mouse-ear cress).